A 202-amino-acid chain; its full sequence is Protein phosphatase 1 regulatory subunit 1B (202 aa).

Residue M1 is modified to N-acetylmethionine. Residues 1 to 202 (MDPKDRKKIQ…QRPAHPEPGT (202 aa)) are disordered. T34 is modified (phosphothreonine; by PKA). Over residues 41-63 (LSEHSSPEEEASPHQRASGEGHH) the composition is skewed to basic and acidic residues. Residues S45 and S46 each carry the phosphoserine modification. A Phosphothreonine; by CDK5 modification is found at T75. The segment covering 89–100 (HLQSISNLGENQ) has biased composition (polar residues). A Phosphoserine modification is found at S102. Over residues 109–118 (GELRELGYPR) the composition is skewed to basic and acidic residues. Residues 119–136 (EEEEEEEEEDEEEEEDSQ) are compositionally biased toward acidic residues. Phosphoserine is present on S135. Basic and acidic residues predominate over residues 191-202 (EPQRPAHPEPGT).

Belongs to the protein phosphatase inhibitor 1 family. Post-translationally, dopamine- and cyclic AMP-regulated neuronal phosphoprotein. In terms of processing, phosphorylation of Thr-34 is required for activity.

It localises to the cytoplasm. Functionally, inhibitor of protein-phosphatase 1. This chain is Protein phosphatase 1 regulatory subunit 1B (PPP1R1B), found in Bos taurus (Bovine).